A 297-amino-acid polypeptide reads, in one-letter code: Non-homologous end-joining factor 1 (297 aa).

Residues 1-131 (MDARLLQLPW…ATVSTVCRHL (131 aa)) form a globular head region. The segment at 220 to 286 (PKAPTHPKEE…LTHRPPAGAS (67 aa)) is C-terminal tail. Residues 222-297 (APTHPKEEDT…PKKKAKGLFM (76 aa)) are disordered. Residues 232–255 (GNSASHRPMAESSSISFEKTVPTQ) show a composition bias toward polar residues. Positions 263–286 (VSEPSQVPQSSVSCLTHRPPAGAS) are enriched in low complexity. The XLM motif lies at 287 to 297 (KPKKKAKGLFM). The segment covering 287-297 (KPKKKAKGLFM) has biased composition (basic residues).

The protein belongs to the XRCC4-XLF family. XLF subfamily. Homodimer. Interacts with xrcc4; the interaction is direct and is mediated via a head-to-head interaction between N-terminal head regions. Component of the core long-range non-homologous end joining (NHEJ) complex (also named DNA-PK complex) composed of prkdc/DNA-PKcs, lig4, xrcc4, xrcc6/Ku70, xrcc5/Ku80 and nhej1/xlf.

The protein localises to the nucleus. Functionally, DNA repair protein involved in DNA non-homologous end joining (NHEJ); required for double-strand break (DSB) repair and V(D)J recombination. It is also involved in telomere maintenance. Plays a key role in NHEJ by promoting the ligation of various mismatched and non-cohesive ends. In some studies, has been shown to associate with xrcc4 to form alternating helical filaments that bridge DNA and act like a bandage, holding together the broken DNA until it is repaired. Alternatively, it has also been shown that rather than forming filaments, a single nhej1 dimer interacts through both head domains with xrcc4 to promote the close alignment of DNA ends. The xrcc4-nhej1/xlf subcomplex binds to the DNA fragments of a DSB in a highly diffusive manner and robustly bridges two independent DNA molecules, holding the broken DNA fragments in close proximity to one other. The mobility of the bridges ensures that the ends remain accessible for further processing by other repair factors. In Xenopus laevis (African clawed frog), this protein is Non-homologous end-joining factor 1.